The primary structure comprises 306 residues: Beta-lactamase 1 (306 aa).

The signal sequence occupies residues 1-43 (MKNKKMLKIGMCVGILGLSITSLVTFTGGALQVEAKEKTGQVK). Residue Ser-89 is the Acyl-ester intermediate of the active site. Glu-185 serves as the catalytic Proton acceptor. 251-253 (KSG) is a binding site for substrate.

Belongs to the class-A beta-lactamase family.

Its subcellular location is the secreted. The enzyme catalyses a beta-lactam + H2O = a substituted beta-amino acid. Acts preferentially on penicillins. The sequence is that of Beta-lactamase 1 (penPC) from Bacillus cereus.